The primary structure comprises 214 residues: Heat shock protein 26 (214 aa).

Serine 2 is subject to N-acetylserine. Threonine 42 bears the Phosphothreonine mark. The sHSP domain occupies 86 to 207 (GFPRSVAVPV…KNHVKKIEVS (122 aa)). Serine 90 is subject to Phosphoserine. Threonine 163 is modified (phosphothreonine). Residues 192–214 (KPQKDGKNHVKKIEVSSQESWGN) are disordered. Residues 193-205 (PQKDGKNHVKKIE) show a composition bias toward basic and acidic residues. Residues serine 208 and serine 211 each carry the phosphoserine modification.

The protein belongs to the small heat shock protein (HSP20) family. Present in large complexes.

Its function is as follows. Not known. One of the major polypeptides produced on heat shock. This is Heat shock protein 26 (HSP26) from Saccharomyces cerevisiae (strain ATCC 204508 / S288c) (Baker's yeast).